The chain runs to 487 residues: MLPVIALVGRPNVGKSTLFNRLTRTRDALVADFPGLTRDRKYGQANYDGYEFIVVDTGGIDGSEEGIEIEMADQSLLAIEEADIVLFLVDARVGMTVADQAIANHLRKQEKKCFVVANKTDGIDADSNCAEFYQLSLGEIHHIAASHGRGITLLLEQTLQPLIAELAALDEDVSNDDEELIDLYQEDSEDDSHQAFADKPVKLAIIGRPNVGKSTLTNRILGEERVIVYDMPGTTRDSIYIPMTRNDKEYILIDTAGVRKRKKVSDVVEKFSVIKTLQAIEDCNVVLLVVDARAGISDQDLSLLGFALNSGRSLVIAVNKWDGLDDYVKDRIKSELDRRLGFIDFARLHFISALHGTGVGHLFESVDEAYESATKRISTAMLRRIMDMAQADHQPPLVRGRRVKLKYAHAGGYNPPRIVIHGNQVHDLPDSYKRYLMNYYRKALKIMGTPIKIEFREGDNPFAGRVNKITLSQKRKIRAFSKENRNK.

2 consecutive EngA-type G domains span residues 3-166 (PVIA…IAEL) and 201-374 (VKLA…ESAT). GTP contacts are provided by residues 9-16 (GRPNVGKS), 56-60 (DTGGI), 118-121 (NKTD), 207-214 (GRPNVGKS), 254-258 (DTAGV), and 319-322 (NKWD). Residues 375–459 (KRISTAMLRR…PIKIEFREGD (85 aa)) form the KH-like domain.

The protein belongs to the TRAFAC class TrmE-Era-EngA-EngB-Septin-like GTPase superfamily. EngA (Der) GTPase family. As to quaternary structure, associates with the 50S ribosomal subunit.

GTPase that plays an essential role in the late steps of ribosome biogenesis. The sequence is that of GTPase Der from Pseudoalteromonas translucida (strain TAC 125).